A 682-amino-acid polypeptide reads, in one-letter code: Protein asunder (682 aa).

Positions 517–570 (NGARLKLSKAKDQYRLLYRELEQLIHLNATTVHHKNLLESLQSLRAAYGEAKSE) form a coiled coil. Residues 571–583 (PNSSLLRSYTESP) show a composition bias toward polar residues. Residues 571–612 (PNSSLLRSYTESPHSPERLEPIPSGGSSGSNSNSLLKASKRR) are disordered. A Nuclear localization signal (NLS) motif is present at residues 606-612 (LKASKRR).

Belongs to the Integrator subunit 13 family. Belongs to the multiprotein complex Integrator, at least composed of IntS1, IntS2, IntS3, IntS4, omd/IntS5, IntS6, defl/IntS7, IntS8, IntS9, IntS10, IntS11, IntS12, asun/IntS13, IntS14 and IntS15. The core complex associates with protein phosphatase 2A subunits mts/PP2A and Pp2A-29B, to form the Integrator-PP2A (INTAC) complex. In terms of processing, phosphorylated.

Its subcellular location is the nucleus. It localises to the cytoplasm. The protein localises to the perinuclear region. Its function is as follows. Component of the integrator complex, a multiprotein complex that terminates RNA polymerase II (Pol II) transcription in the promoter-proximal region of genes. The integrator complex provides a quality checkpoint during transcription elongation by driving premature transcription termination of transcripts that are unfavorably configured for transcriptional elongation: the complex terminates transcription by (1) catalyzing dephosphorylation of the C-terminal domain (CTD) of Pol II subunit Polr2A/Rbp1 and Spt5, and (2) degrading the exiting nascent RNA transcript via endonuclease activity. The integrator complex is also involved in the 3'-end processing of the U7 snRNA, and also the spliceosomal snRNAs U1, U2, U4 and U5. The sequence is that of Protein asunder (asun) from Drosophila ananassae (Fruit fly).